Here is a 61-residue protein sequence, read N- to C-terminus: Putative defensin-like protein 72 (61 aa).

4 cysteine pairs are disulfide-bonded: Cys21/Cys59, Cys25/Cys48, Cys34/Cys57, and Cys38/Cys58.

Belongs to the DEFL family.

In Arabidopsis thaliana (Mouse-ear cress), this protein is Putative defensin-like protein 72.